Here is a 145-residue protein sequence, read N- to C-terminus: Functional amyloid chaperone FapA (145 aa).

A signal peptide spans 1–27 (MRKRDKRLYHLLLVGCVLGSLSLTAQA).

It belongs to the FapA family. In terms of assembly, monomer in solution. Interacts with FapC but not FapB in vitro.

The protein localises to the periplasm. Functionally, an intrinsically disordered chaperone for fibril amyloid FapC that guards against fibrillation, pro within the periplasm. Upon overexpression of the endogenous six-gene locus (fapA-fapF), cells form large clumps during liquid growth, make large amounts of biofilm and produce relatively unstable amyloid fibrils. The protein is Functional amyloid chaperone FapA of Pseudomonas putida (strain ATCC 700007 / DSM 6899 / JCM 31910 / BCRC 17059 / LMG 24140 / F1).